A 414-amino-acid chain; its full sequence is MLQLSISHIIVLSLLIRIGFFLFGLYQDKYMTVKYTDIDYVVFSDAANYVYNGYSPYSRETYRYTPLLAWMLIPNCWGGQWSNFGKYIFMISDLITGIIILKLLSGISIAGKKLSTNKIIMLSSIWLLNPMVITISTRGSSESVLTVMIMLSLYYLINKKSIIASGFWLGLSIHFKIYPVIYLPSIMLYLSTSGTPFIDVPIVRWVNRTNIKFLITTLITIGAFNGIMYSIYGYEFLYNSYLYHLIRIDHRHNFSVYNVALYYKSALSEIAEASLGFFTGNMEKFVMLPQLSISALILPLLFARRDLISCIFIQTFAFVTFNKVITSQYFIWFLIFLPHYLAQSKLYSNKHMMKGIVALLLWIVSQGSWLYFAYQLEFLGISTFDNGLLFSSFFFYISNCWILSVFIDDLNNDL.

The next 10 helical transmembrane spans lie at 6-26 (ISHI…FGLY), 87-107 (YIFM…LSGI), 119-139 (IIML…STRG), 149-171 (IMLS…WLGL), 183-203 (LPSI…VPIV), 213-233 (FLIT…SIYG), 282-302 (MEKF…PLLF), 316-336 (FAFV…FLIF), 356-376 (IVAL…AYQL), and 387-407 (GLLF…SVFI).

It belongs to the PIGM family.

The protein localises to the endoplasmic reticulum membrane. It participates in glycolipid biosynthesis; glycosylphosphatidylinositol-anchor biosynthesis. Its function is as follows. Mannosyltransferase involved in glycosylphosphatidylinositol-anchor biosynthesis. Transfers the first alpha-1,4-mannose to GlcN-acyl-PI during GPI precursor assembly. Required for cell wall integrity. The sequence is that of GPI mannosyltransferase 1 (GPI14) from Debaryomyces hansenii (strain ATCC 36239 / CBS 767 / BCRC 21394 / JCM 1990 / NBRC 0083 / IGC 2968) (Yeast).